A 727-amino-acid polypeptide reads, in one-letter code: Glucans biosynthesis glucosyltransferase H (727 aa).

The disordered stretch occupies residues 17 to 41 (GSAMPNERPGPMEPQSLSQMPEGFP). 6 helical membrane-spanning segments follow: residues 58 to 80 (FFVV…AVFS), 95 to 117 (FAIN…LLLL), 407 to 429 (GIMA…MLAL), 457 to 479 (ALRL…VLLL), 499 to 521 (VLFE…CGAV), and 572 to 594 (LLAW…AWTG).

The protein belongs to the glycosyltransferase 2 family. OpgH subfamily.

The protein resides in the cell inner membrane. It participates in glycan metabolism; osmoregulated periplasmic glucan (OPG) biosynthesis. Involved in the biosynthesis of osmoregulated periplasmic glucans (OPGs). The chain is Glucans biosynthesis glucosyltransferase H from Shewanella oneidensis (strain ATCC 700550 / JCM 31522 / CIP 106686 / LMG 19005 / NCIMB 14063 / MR-1).